A 468-amino-acid chain; its full sequence is Secreted triacylglycerol lipase LIP7 (468 aa).

The N-terminal stretch at 1 to 21 (MFPRQILVFAALGLCFALVAG) is a signal peptide. The cysteines at positions 125 and 295 are disulfide-linked. The active-site Nucleophile is the Ser209. Catalysis depends on residues Asp355 and His389.

This sequence belongs to the AB hydrolase superfamily. Lipase family. Class Lip subfamily.

It is found in the secreted. The protein resides in the cell wall. It catalyses the reaction a triacylglycerol + H2O = a diacylglycerol + a fatty acid + H(+). The enzyme catalyses a monoacylglycerol + H2O = glycerol + a fatty acid + H(+). It carries out the reaction a diacylglycerol + H2O = a monoacylglycerol + a fatty acid + H(+). In terms of biological role, secreted lipase involved in Dandruff and seborrheic dermatitis (D/SD) probably via lipase-mediated breakdown of sebaceous lipids and release of irritating free fatty acids. Has triacylglycerol lipase activity and is able to hydrolyze triolein. Mostly converts monoolein to di- and triolein, while free fatty acids are only produced in low amounts. This chain is Secreted triacylglycerol lipase LIP7, found in Malassezia globosa (strain ATCC MYA-4612 / CBS 7966) (Dandruff-associated fungus).